Here is a 687-residue protein sequence, read N- to C-terminus: Acetyl-coenzyme A synthetase 2 (687 aa).

CoA-binding positions include 206–209 (RGGK) and threonine 325. ATP is bound by residues 401 to 403 (GEP), 425 to 430 (DTMWQT), aspartate 516, and arginine 531. Serine 539 lines the CoA pocket. Arginine 542 is an ATP binding site. Arginine 617 is a CoA binding site.

It belongs to the ATP-dependent AMP-binding enzyme family.

It carries out the reaction acetate + ATP + CoA = acetyl-CoA + AMP + diphosphate. This Eremothecium gossypii (strain ATCC 10895 / CBS 109.51 / FGSC 9923 / NRRL Y-1056) (Yeast) protein is Acetyl-coenzyme A synthetase 2 (ACS2).